A 137-amino-acid chain; its full sequence is Small ribosomal subunit protein uS12 (137 aa).

The interval 1–57 (MPTINQLVRKPRKSKVKKSKSPALNVGYNSRKKVQTNVSSPQKRGVATRVGTMTPKK) is disordered. Over residues 9-20 (RKPRKSKVKKSK) the composition is skewed to basic residues. At aspartate 102 the chain carries 3-methylthioaspartic acid.

It belongs to the universal ribosomal protein uS12 family. In terms of assembly, part of the 30S ribosomal subunit. Contacts proteins S8 and S17. May interact with IF1 in the 30S initiation complex.

With S4 and S5 plays an important role in translational accuracy. Functionally, interacts with and stabilizes bases of the 16S rRNA that are involved in tRNA selection in the A site and with the mRNA backbone. Located at the interface of the 30S and 50S subunits, it traverses the body of the 30S subunit contacting proteins on the other side and probably holding the rRNA structure together. The combined cluster of proteins S8, S12 and S17 appears to hold together the shoulder and platform of the 30S subunit. This chain is Small ribosomal subunit protein uS12, found in Streptococcus suis (strain 05ZYH33).